Here is a 100-residue protein sequence, read N- to C-terminus: Large ribosomal subunit protein uL23 (100 aa).

The protein belongs to the universal ribosomal protein uL23 family. As to quaternary structure, part of the 50S ribosomal subunit. Contacts protein L29, and trigger factor when it is bound to the ribosome.

In terms of biological role, one of the early assembly proteins it binds 23S rRNA. One of the proteins that surrounds the polypeptide exit tunnel on the outside of the ribosome. Forms the main docking site for trigger factor binding to the ribosome. The chain is Large ribosomal subunit protein uL23 from Thermotoga neapolitana (strain ATCC 49049 / DSM 4359 / NBRC 107923 / NS-E).